The sequence spans 464 residues: L-cystine uptake protein TcyP (464 aa).

The next 10 membrane-spanning stretches (helical) occupy residues 3–23 (TLLV…LYYM), 34–54 (VFTA…IYEP), 73–93 (YVKL…ISAF), 107–127 (GLII…GIAA), 184–204 (PTST…FIGV), 225–245 (IVMR…LALM), 263–283 (FVLA…LLIA), 347–367 (AGIY…IDPL), 371–391 (FILT…GVGG), and 395–415 (FAAL…ALVI).

It belongs to the dicarboxylate/amino acid:cation symporter (DAACS) (TC 2.A.23) family.

It is found in the membrane. Mediates uptake of L-cystine, the oxidized form of L-cysteine. This is L-cystine uptake protein TcyP from Bacillus thuringiensis (strain Al Hakam).